Reading from the N-terminus, the 1299-residue chain is Tenascin-N (1299 aa).

An N-terminal signal peptide occupies residues 1–28; it reads MSLQEMFRFPMGLLLGSVLLVASAPATL. EGF-like domains are found at residues 167–198, 199–229, and 230–260; these read ERLACPGACSGHGRCVDGRCLCHEPYVGADCG, YPACPENCSGHGECVRGVCQCHEDFMSEDCS, and EKRCPGDCSGHGFCDTGECYCEEGFTGLDCA. Disulfide bonds link C171–C181, C175–C186, C188–C197, C202–C212, C206–C217, C219–C228, C233–C243, C237–C248, and C250–C259. 9 Fibronectin type-III domains span residues 264-352, 353-444, 445-532, 533-623, 624-709, 710-800, 801-886, 887-976, and 977-1063; these read TPQG…TDLA, VLGT…TEID, SPTN…TEID, SPAN…IDSP, KNLV…TDID, SPQN…IDSP, QNLV…TEID, GPKN…LDPP, and RNLR…VGAR. The interval 605–624 is disordered; the sequence is GDRESKKADTNAPTDIDSPK. A compositionally biased stretch (basic and acidic residues) spans 960-977; it reads QESKKADTKAQTELDPPR. The segment at 960–982 is disordered; the sequence is QESKKADTKAQTELDPPRNLRPS. Residues 1061-1278 enclose the Fibrinogen C-terminal domain; that stretch reads GARFPHPSDC…YVELKIRPHG (218 aa). N1149 carries N-linked (GlcNAc...) asparagine glycosylation.

Belongs to the tenascin family. In terms of assembly, homohexamer. As to expression, not detected in normal adult mammary tissues or brain but expressed in most breast tumors and brain tumors, such as glioblastomas, astrocytomas and oligodendrogliomas, tested. In brain tumors, detected around the endothelial cell layer of the clood vessels.

It is found in the secreted. The protein resides in the extracellular space. The protein localises to the extracellular matrix. Its function is as follows. Extracellular matrix protein that seems to be a ligand for ITGA8:ITGB1, ITGAV:ITGB1 and ITGA4:ITGB1. Involved in neurite outgrowth and cell migration in hippocampal explants. During endochondral bone formation, inhibits proliferation and differentiation of proteoblasts mediated by canonical WNT signaling. In tumors, stimulates angiogenesis by elongation, migration and sprouting of endothelial cells. Expressed in most mammary tumors, may facilitate tumorigenesis by supporting the migratory behavior of breast cancer cells. The protein is Tenascin-N of Homo sapiens (Human).